The chain runs to 484 residues: Glycogen synthase (484 aa).

Lys-15 is an ADP-alpha-D-glucose binding site.

It belongs to the glycosyltransferase 1 family. Bacterial/plant glycogen synthase subfamily.

The catalysed reaction is [(1-&gt;4)-alpha-D-glucosyl](n) + ADP-alpha-D-glucose = [(1-&gt;4)-alpha-D-glucosyl](n+1) + ADP + H(+). Its pathway is glycan biosynthesis; glycogen biosynthesis. Functionally, synthesizes alpha-1,4-glucan chains using ADP-glucose. This chain is Glycogen synthase, found in Koribacter versatilis (strain Ellin345).